The sequence spans 383 residues: L-lactate dehydrogenase (383 aa).

Residues 1–380 (MIISSGNDYR…NTDCLVQAIK (380 aa)) enclose the FMN hydroxy acid dehydrogenase domain. Residue Y24 coordinates substrate. 2 residues coordinate FMN: S106 and Q127. Y129 provides a ligand contact to substrate. FMN is bound at residue T155. R164 serves as a coordination point for substrate. Residue K251 participates in FMN binding. Catalysis depends on H275, which acts as the Proton acceptor. R278 serves as a coordination point for substrate. 306–330 (DSGIRNGLDVVRMLALGADTVLLGR) contacts FMN.

The protein belongs to the FMN-dependent alpha-hydroxy acid dehydrogenase family. FMN is required as a cofactor.

It is found in the cell inner membrane. It carries out the reaction (S)-lactate + A = pyruvate + AH2. In terms of biological role, catalyzes the conversion of L-lactate to pyruvate. Is coupled to the respiratory chain. The protein is L-lactate dehydrogenase of Acinetobacter baumannii (strain SDF).